The chain runs to 249 residues: 5'-nucleotidase SurE (249 aa).

A divalent metal cation is bound by residues D8, D9, S39, and N91.

The protein belongs to the SurE nucleotidase family. The cofactor is a divalent metal cation.

It is found in the cytoplasm. It catalyses the reaction a ribonucleoside 5'-phosphate + H2O = a ribonucleoside + phosphate. In terms of biological role, nucleotidase that shows phosphatase activity on nucleoside 5'-monophosphates. In Azotobacter vinelandii (strain DJ / ATCC BAA-1303), this protein is 5'-nucleotidase SurE.